Reading from the N-terminus, the 475-residue chain is Glycogen synthase (475 aa).

An ADP-alpha-D-glucose-binding site is contributed by Lys15.

Belongs to the glycosyltransferase 1 family. Bacterial/plant glycogen synthase subfamily.

The enzyme catalyses [(1-&gt;4)-alpha-D-glucosyl](n) + ADP-alpha-D-glucose = [(1-&gt;4)-alpha-D-glucosyl](n+1) + ADP + H(+). The protein operates within glycan biosynthesis; glycogen biosynthesis. Its function is as follows. Synthesizes alpha-1,4-glucan chains using ADP-glucose. In Clostridium kluyveri (strain ATCC 8527 / DSM 555 / NBRC 12016 / NCIMB 10680 / K1), this protein is Glycogen synthase.